The chain runs to 297 residues: Aspartate carbamoyltransferase catalytic subunit (297 aa).

R51 and T52 together coordinate carbamoyl phosphate. K79 provides a ligand contact to L-aspartate. R101, H130, and Q133 together coordinate carbamoyl phosphate. R163 and R215 together coordinate L-aspartate. G256 and P257 together coordinate carbamoyl phosphate.

Belongs to the aspartate/ornithine carbamoyltransferase superfamily. ATCase family. As to quaternary structure, heterododecamer (2C3:3R2) of six catalytic PyrB chains organized as two trimers (C3), and six regulatory PyrI chains organized as three dimers (R2).

The catalysed reaction is carbamoyl phosphate + L-aspartate = N-carbamoyl-L-aspartate + phosphate + H(+). It functions in the pathway pyrimidine metabolism; UMP biosynthesis via de novo pathway; (S)-dihydroorotate from bicarbonate: step 2/3. Its function is as follows. Catalyzes the condensation of carbamoyl phosphate and aspartate to form carbamoyl aspartate and inorganic phosphate, the committed step in the de novo pyrimidine nucleotide biosynthesis pathway. The sequence is that of Aspartate carbamoyltransferase catalytic subunit from Ehrlichia ruminantium (strain Gardel).